We begin with the raw amino-acid sequence, 507 residues long: Heat shock 70 kDa protein 14-B (507 aa).

Belongs to the heat shock protein 70 family. In terms of assembly, component of ribosome-associated complex (RAC).

The protein resides in the cytoplasm. It is found in the cytosol. Its function is as follows. Component of the ribosome-associated complex (RAC), a complex involved in folding or maintaining nascent polypeptides in a folding-competent state. The protein is Heat shock 70 kDa protein 14-B (hspa14-b) of Xenopus laevis (African clawed frog).